Here is a 516-residue protein sequence, read N- to C-terminus: uncharacterized protein (516 aa).

The uDENN domain maps to 31-185 (ACIFLSKFDM…LDKFDIFEKF (155 aa)). One can recognise a cDENN domain in the interval 211 to 365 (HLVEYLPYWT…LEVYEKLILG (155 aa)). Positions 367–513 (LQEDASTNAT…DISNLPECLG (147 aa)) constitute a dDENN domain. S-palmitoyl cysteine attachment occurs at residues C511 and C516.

In terms of processing, palmitoylated by AKR1.

The protein resides in the lipid droplet. May be involved in lipid metabolism. This is an uncharacterized protein from Saccharomyces cerevisiae (strain ATCC 204508 / S288c) (Baker's yeast).